The following is a 405-amino-acid chain: CMP-sialic acid transporter 5 (405 aa).

The Cytoplasmic portion of the chain corresponds to 1-43; that stretch reads MQRNGVVECSVCRSRLVVPSPRSVSRAYDKHRSKISSKFRALN. A helical transmembrane segment spans residues 44–64; that stretch reads VLLVVGDCILVGLQPILVFMS. At 65-74 the chain is on the lumenal side; it reads KVDGKFQFSP. The helical transmembrane segment at 75–95 threads the bilayer; the sequence is ISVNFLTEVTKVVFAIVMLII. Residues 96–121 are Cytoplasmic-facing; sequence QSRKQKVGEKPLLARSTFIQAARNNA. A helical membrane pass occupies residues 122–142; that stretch reads LLAVPALLYAINNYLKFIMQL. Residues 143 to 147 lie on the Lumenal side of the membrane; that stretch reads YFNPS. The chain crosses the membrane as a helical span at residues 148–168; it reads TVKMLSNLKVLVIAVLLKFIM. The Cytoplasmic segment spans residues 169–171; sequence KRR. The chain crosses the membrane as a helical span at residues 172–192; that stretch reads FSVIQWEALALLLIGISINQL. Residues 193 to 200 are Lumenal-facing; sequence RTVPAGNT. The helical transmembrane segment at 201–221 threads the bilayer; it reads AFGLPVTAIAYIYTLIFVTVP. At 222–244 the chain is on the cytoplasmic side; the sequence is SLASVYNEYALKSQYDTSIYLQN. Residues 245–265 traverse the membrane as a helical segment; that stretch reads LFLYGYGAIFNFLGILGTALF. Residues 266-281 are Lumenal-facing; that stretch reads QGPESFNILRGHSRAT. A helical transmembrane segment spans residues 282–302; sequence MFLICNNAAQGILSSFFFKYA. Topologically, residues 303 to 322 are cytoplasmic; sequence DTILKKYSSTVATIFTGLAS. A helical membrane pass occupies residues 323-343; that stretch reads AAFLGHTLTINFLLGISVVFI. The Lumenal portion of the chain corresponds to 344 to 405; the sequence is SMHQFFSPLA…TDERQPLLPT (62 aa). The disordered stretch occupies residues 368-405; it reads DTQNHRSSESSFVNMTAGAAEDASHRIGTDERQPLLPT. Residues 389 to 405 are compositionally biased toward basic and acidic residues; that stretch reads DASHRIGTDERQPLLPT.

Belongs to the nucleotide-sugar transporter family. CMP-Sialate:CMP antiporter (TC 2.A.7.12) subfamily.

The protein localises to the golgi apparatus membrane. Its function is as follows. Sugar transporter involved in the transport of CMP-sialic acid from the cytoplasm into the Golgi. May transport important nucleotide sugars such as CMP-Kdo (2-keto-3-deoxy-D-manno-octulosonic acid) in physiological conditions. The polypeptide is CMP-sialic acid transporter 5 (Oryza sativa subsp. japonica (Rice)).